The primary structure comprises 1083 residues: Ubiquitin carboxyl-terminal hydrolase 1 (1083 aa).

The UBP-type zinc finger occupies 30–165 (RSCVHFDKYV…KKDLLLEVVK (136 aa)). Cys32, His34, Cys56, Cys59, Cys95, Cys98, Cys103, His115, His119, His125, Cys139, and Cys142 together coordinate Zn(2+). Positions 202-1083 (RGLVNLGNTC…EAYILFYERI (882 aa)) constitute a USP domain. Cys211 (nucleophile) is an active-site residue. 2 disordered regions span residues 387-424 (KDSE…DNET) and 450-486 (GSTE…ASGI). 2 stretches are compositionally biased toward basic and acidic residues: residues 409-419 (SDHKIQSRPET) and 455-473 (LMHD…EDVR). The segment covering 474-485 (ATQSNEETSASG) has biased composition (polar residues). His1029 serves as the catalytic Proton acceptor.

Belongs to the peptidase C19 family.

The catalysed reaction is Thiol-dependent hydrolysis of ester, thioester, amide, peptide and isopeptide bonds formed by the C-terminal Gly of ubiquitin (a 76-residue protein attached to proteins as an intracellular targeting signal).. Recognizes and hydrolyzes the peptide bond at the C-terminal Gly of ubiquitin. Involved in the processing of poly-ubiquitin precursors as well as that of ubiquitinated proteins. Is involved in resistance to the arginine analog canavanine (CAN). This is Ubiquitin carboxyl-terminal hydrolase 1 (UBP1) from Arabidopsis thaliana (Mouse-ear cress).